The sequence spans 23 residues: Cysteine proteinase (23 aa).

The segment covering 1-10 has biased composition (basic and acidic residues); that stretch reads ADSLDWREKG. The disordered stretch occupies residues 1 to 23; sequence ADSLDWREKGVVNSIKDQAQXGS.

This sequence belongs to the peptidase C1 family.

This Tritrichomonas foetus (Trichomonas foetus) protein is Cysteine proteinase.